The primary structure comprises 256 residues: Cysteine-rich repeat secretory protein 42 (256 aa).

A signal peptide spans 1-26; the sequence is MSSVFGSVHILAMIAIQLLLTHSVSS. Gnk2-homologous domains lie at 33–136 and 142–253; these read YLHH…SVAS and YEND…LYPF.

The protein belongs to the cysteine-rich repeat secretory protein family.

The protein resides in the secreted. The sequence is that of Cysteine-rich repeat secretory protein 42 (CRRSP42) from Arabidopsis thaliana (Mouse-ear cress).